An 85-amino-acid polypeptide reads, in one-letter code: UPF0297 protein CPR_1749 (85 aa).

The protein belongs to the UPF0297 family.

The protein is UPF0297 protein CPR_1749 of Clostridium perfringens (strain SM101 / Type A).